Reading from the N-terminus, the 84-residue chain is Putative pelota-like protein YCL001W-B (84 aa).

It belongs to the eukaryotic release factor 1 family. Pelota subfamily. Highly divergent.

The polypeptide is Putative pelota-like protein YCL001W-B (Saccharomyces cerevisiae (strain ATCC 204508 / S288c) (Baker's yeast)).